A 97-amino-acid polypeptide reads, in one-letter code: Large ribosomal subunit protein uL23 (97 aa).

It belongs to the universal ribosomal protein uL23 family. In terms of assembly, part of the 50S ribosomal subunit. Contacts protein L29, and trigger factor when it is bound to the ribosome.

One of the early assembly proteins it binds 23S rRNA. One of the proteins that surrounds the polypeptide exit tunnel on the outside of the ribosome. Forms the main docking site for trigger factor binding to the ribosome. This chain is Large ribosomal subunit protein uL23, found in Clostridium perfringens (strain SM101 / Type A).